Reading from the N-terminus, the 287-residue chain is MTTEENKTSRNRKRKRQRNPKPSKEEPIETTPKNQNEKKNQRDTKNQQHGGSSAPSKRPKPSNFLDALRERLSGGQFRMLNEKLYTCSGKEALDYFKEDPQMFDMYHTGYQQQMSNWPELPVNSIINWLLSNSSSLVVADFGCGDARIAKSVKNKVFSFDLVSKNPSVIACDMSNTSLESSSVDVAVFCLSLMGTNYSSYIKEAHRVLRPSGMLLIAEVKSRFDPNNGGADPKDFVKAVCDLGFTSVLKDFSNKMFILFHFKKKEQMNSNQKIIKWPELKACLYKRR.

A disordered region spans residues 1–62 (MTTEENKTSR…SAPSKRPKPS (62 aa)). Over residues 9-21 (SRNRKRKRQRNPK) the composition is skewed to basic residues. Residues 35–46 (QNEKKNQRDTKN) are compositionally biased toward basic and acidic residues. Residues histidine 107, glycine 142, aspartate 160, aspartate 172, methionine 173, and cysteine 189 each coordinate S-adenosyl-L-methionine.

Belongs to the methyltransferase superfamily. RRP8 family.

Its subcellular location is the nucleus. The protein localises to the nucleolus. Probable methyltransferase required to silence rDNA. The protein is Ribosomal RNA-processing protein 8 of Arabidopsis thaliana (Mouse-ear cress).